The following is a 1606-amino-acid chain: Pentafunctional AROM polypeptide (1606 aa).

A 3-dehydroquinate synthase region spans residues 1 to 390 (MANADVLKVS…YEPKATVVPD (390 aa)). Residues 45–47 (DTN), 85–88 (ETSK), 116–118 (GGV), and aspartate 121 each bind NAD(+). Residue arginine 132 coordinates 7-phospho-2-dehydro-3-deoxy-D-arabino-heptonate. NAD(+) is bound at residue 141-142 (TT). Aspartate 148 and lysine 154 together coordinate 7-phospho-2-dehydro-3-deoxy-D-arabino-heptonate. Lysine 163 provides a ligand contact to NAD(+). Residue asparagine 164 coordinates 7-phospho-2-dehydro-3-deoxy-D-arabino-heptonate. NAD(+)-binding positions include 181–184 (FLET) and asparagine 192. Glutamate 196 is a Zn(2+) binding site. Residues 196-199 (EVVK) and lysine 256 contribute to the 7-phospho-2-dehydro-3-deoxy-D-arabino-heptonate site. Glutamate 266 acts as the Proton acceptor; for 3-dehydroquinate synthase activity in catalysis. 7-phospho-2-dehydro-3-deoxy-D-arabino-heptonate-binding positions include 270-274 (RNLVN) and histidine 277. Position 277 (histidine 277) interacts with Zn(2+). Histidine 281 serves as the catalytic Proton acceptor; for 3-dehydroquinate synthase activity. 7-phospho-2-dehydro-3-deoxy-D-arabino-heptonate contacts are provided by histidine 293 and lysine 362. Histidine 293 is a Zn(2+) binding site. Residues 403-850 (VIPGVPRHHP…WDDLENKIGL (448 aa)) are EPSP synthase. Catalysis depends on cysteine 832, which acts as the For EPSP synthase activity. The interval 875–1070 (AASIILIGMR…TSGRRSYFLC (196 aa)) is shikimate kinase. 882-889 (GMRGTGKT) serves as a coordination point for ATP. The tract at residues 1071-1296 (LTYPDVTQSF…AAPGQLSFKQ (226 aa)) is 3-dehydroquinase. Histidine 1198 functions as the Proton acceptor; for 3-dehydroquinate dehydratase activity in the catalytic mechanism. Residue lysine 1226 is the Schiff-base intermediate with substrate; for 3-dehydroquinate dehydratase activity of the active site. The shikimate dehydrogenase stretch occupies residues 1309–1606 (AQRFYLFGTP…QFVFEEECES (298 aa)).

The protein in the N-terminal section; belongs to the sugar phosphate cyclases superfamily. Dehydroquinate synthase family. In the 2nd section; belongs to the EPSP synthase family. This sequence in the 3rd section; belongs to the shikimate kinase family. It in the 4th section; belongs to the type-I 3-dehydroquinase family. The protein in the C-terminal section; belongs to the shikimate dehydrogenase family. In terms of assembly, homodimer. Requires Zn(2+) as cofactor.

Its subcellular location is the cytoplasm. The enzyme catalyses 7-phospho-2-dehydro-3-deoxy-D-arabino-heptonate = 3-dehydroquinate + phosphate. The catalysed reaction is 3-dehydroquinate = 3-dehydroshikimate + H2O. It catalyses the reaction shikimate + NADP(+) = 3-dehydroshikimate + NADPH + H(+). It carries out the reaction shikimate + ATP = 3-phosphoshikimate + ADP + H(+). The enzyme catalyses 3-phosphoshikimate + phosphoenolpyruvate = 5-O-(1-carboxyvinyl)-3-phosphoshikimate + phosphate. It participates in metabolic intermediate biosynthesis; chorismate biosynthesis; chorismate from D-erythrose 4-phosphate and phosphoenolpyruvate: step 2/7. Its pathway is metabolic intermediate biosynthesis; chorismate biosynthesis; chorismate from D-erythrose 4-phosphate and phosphoenolpyruvate: step 3/7. It functions in the pathway metabolic intermediate biosynthesis; chorismate biosynthesis; chorismate from D-erythrose 4-phosphate and phosphoenolpyruvate: step 4/7. The protein operates within metabolic intermediate biosynthesis; chorismate biosynthesis; chorismate from D-erythrose 4-phosphate and phosphoenolpyruvate: step 5/7. It participates in metabolic intermediate biosynthesis; chorismate biosynthesis; chorismate from D-erythrose 4-phosphate and phosphoenolpyruvate: step 6/7. Its function is as follows. The AROM polypeptide catalyzes 5 consecutive enzymatic reactions in prechorismate polyaromatic amino acid biosynthesis. The protein is Pentafunctional AROM polypeptide of Laccaria bicolor (strain S238N-H82 / ATCC MYA-4686) (Bicoloured deceiver).